The sequence spans 519 residues: Chaperone SurA (519 aa).

A signal peptide spans 1–31 (MMRSLHSLRRMSGTVLALMLAAGLPLSAAQA). 2 stretches are compositionally biased toward low complexity: residues 31-45 (AQPA…QKPA) and 197-207 (PAAAQATRAPA). Disordered regions lie at residues 31–50 (AQPA…PAPS) and 196–221 (NPAA…PAQS). A PpiC 1 domain is found at 223 to 324 (PAMLVLAQIL…NGFHILKVVD (102 aa)). The tract at residues 328–361 (GGQPAQAARPAPAPAPQQPSSFQEGPSVAAPQGP) is disordered. Residues 364–463 (VTQTHARHIL…FGWHLIQVLE (100 aa)) form the PpiC 2 domain.

The protein localises to the periplasm. The enzyme catalyses [protein]-peptidylproline (omega=180) = [protein]-peptidylproline (omega=0). Chaperone involved in the correct folding and assembly of outer membrane proteins. Recognizes specific patterns of aromatic residues and the orientation of their side chains, which are found more frequently in integral outer membrane proteins. May act in both early periplasmic and late outer membrane-associated steps of protein maturation. This is Chaperone SurA from Bordetella bronchiseptica (strain ATCC BAA-588 / NCTC 13252 / RB50) (Alcaligenes bronchisepticus).